Here is a 211-residue protein sequence, read N- to C-terminus: UPF0502 protein PC1_1804 (211 aa).

Positions 168 to 188 are disordered; it reads SGDASDAAPEEEGAGDNSHQL.

Belongs to the UPF0502 family.

The chain is UPF0502 protein PC1_1804 from Pectobacterium carotovorum subsp. carotovorum (strain PC1).